Consider the following 90-residue polypeptide: Cell division topological specificity factor (90 aa).

The protein belongs to the MinE family.

Prevents the cell division inhibition by proteins MinC and MinD at internal division sites while permitting inhibition at polar sites. This ensures cell division at the proper site by restricting the formation of a division septum at the midpoint of the long axis of the cell. This chain is Cell division topological specificity factor, found in Brucella abortus (strain S19).